We begin with the raw amino-acid sequence, 508 residues long: Cytochrome P450 monooxygenase BipB (508 aa).

The chain crosses the membrane as a helical span at residues 11–31 (ELAWLLLGPLVLFYVFKLFIY). Heme is bound at residue C448.

It belongs to the cytochrome P450 family. The cofactor is heme.

It is found in the membrane. It participates in sesquiterpene biosynthesis. In terms of biological role, cytochrome P450 monooxygenase; part of the minimal biosynthetic bip cluster that mediates the biosynthesis of bridged polycyclic sesquiterpenoids derived from sativene, isosativene, and longifolene. The sesquiterpene cyclase BipA acts as a versatile cyclase that converts farnesyl diphosphate (FPP) into (-)-sativene as the dominant product and (-)-isosativene and (-)-longifolene as minor ones. The cytochrome P450 monooxygenase BipB then hydroxylates different enantiomeric sesquiterpenes, such as (-)-longifolene and (+)-longifolene, at C-15 and C-14. The C-15- or both C-15- and C-14-hydroxylated products are further oxidized by unclustered oxidases, resulting in a structurally diverse array of sesquiterpenoids. The BipB-catalyzed hydroxylation at C-15 serves as an initiator for the oxidation by the unclustered oxidases. In Cochliobolus sativus (Common root rot and spot blotch fungus), this protein is Cytochrome P450 monooxygenase BipB.